Consider the following 441-residue polypeptide: Protein arginine methyltransferase NDUFAF7, mitochondrial (441 aa).

The transit peptide at 1–46 directs the protein to the mitochondrion; that stretch reads MNFLAAAGVRRLCAMRAVLPCLWRGKYFSSGNEPAENNTVTPMLRH. Residues 415–434 form a disordered region; it reads GRNHQTNARQSKPSPSPVAG. Residues 418–427 show a composition bias toward polar residues; sequence HQTNARQSKP.

Belongs to the NDUFAF7 family. Interacts with NDUFS2.

The protein localises to the mitochondrion. It catalyses the reaction L-arginyl-[protein] + 2 S-adenosyl-L-methionine = N(omega),N(omega)'-dimethyl-L-arginyl-[protein] + 2 S-adenosyl-L-homocysteine + 2 H(+). Arginine methyltransferase involved in the assembly or stability of mitochondrial NADH:ubiquinone oxidoreductase complex (complex I). Acts by mediating symmetric dimethylation of 'Arg-118' of NDUFS2 after it assembles into the complex I, stabilizing the early intermediate complex. The polypeptide is Protein arginine methyltransferase NDUFAF7, mitochondrial (Bos taurus (Bovine)).